Reading from the N-terminus, the 448-residue chain is Tryptophan dimethylallyltransferase 1 (448 aa).

L-tryptophan contacts are provided by residues 80 to 81 (IL) and glutamate 89. Arginine 100, lysine 186, and tyrosine 188 together coordinate substrate. Residues tyrosine 190 and arginine 249 each coordinate L-tryptophan. Residues arginine 262, lysine 264, tyrosine 266, glutamine 348, tyrosine 350, tyrosine 414, and tyrosine 418 each contribute to the substrate site.

It belongs to the tryptophan dimethylallyltransferase family. As to quaternary structure, homodimer.

It carries out the reaction L-tryptophan + dimethylallyl diphosphate = 4-(3-methylbut-2-enyl)-L-tryptophan + diphosphate. The protein operates within alkaloid biosynthesis; ergot alkaloid biosynthesis. In terms of biological role, tryptophan dimethylallyltransferase; part of the gene cluster that mediates the biosynthesis of fungal ergot alkaloid. DmaW catalyzes the first step of ergot alkaloid biosynthesis by condensing dimethylallyl diphosphate (DMAP) and tryptophan to form 4-dimethylallyl-L-tryptophan. The second step is catalyzed by the methyltransferase easF that methylates 4-dimethylallyl-L-tryptophan in the presence of S-adenosyl-L-methionine, resulting in the formation of 4-dimethylallyl-L-abrine. The catalase easC and the FAD-dependent oxidoreductase easE then transform 4-dimethylallyl-L-abrine to chanoclavine-I which is further oxidized by easD in the presence of NAD(+), resulting in the formation of chanoclavine-I aldehyde. Agroclavine dehydrogenase easG then mediates the conversion of chanoclavine-I aldehyde to agroclavine via a non-enzymatic adduct reaction: the substrate is an iminium intermediate that is formed spontaneously from chanoclavine-I aldehyde in the presence of glutathione. The presence of easA is not required to complete this reaction. Further conversion of agroclavine to paspalic acid is a two-step process involving oxidation of agroclavine to elymoclavine and of elymoclavine to paspalic acid, the second step being performed by the elymoclavine oxidase cloA. Paspalic acid is then further converted to D-lysergic acid. Ergopeptines are assembled from D-lysergic acid and three different amino acids by the D-lysergyl-peptide-synthetases composed each of a monomudular and a trimodular nonribosomal peptide synthetase subunit. LpsB and lpsC encode the monomodular subunits responsible for D-lysergic acid activation and incorporation into the ergopeptine backbone. LpsA1 and A2 subunits encode the trimodular nonribosomal peptide synthetase assembling the tripeptide portion of ergopeptines. LpsA1 is responsible for formation of the major ergopeptine, ergotamine, and lpsA2 for alpha-ergocryptine, the minor ergopeptine of the total alkaloid mixture elaborated by C.purpurea. D-lysergyl-tripeptides are assembled by the nonribosomal peptide synthetases and released as N-(D-lysergyl-aminoacyl)-lactams. Cyclolization of the D-lysergyl-tripeptides is performed by the Fe(2+)/2-ketoglutarate-dependent dioxygenase easH which introduces a hydroxyl group into N-(D-lysergyl-aminoacyl)-lactam at alpha-C of the aminoacyl residue followed by spontaneous condensation with the terminal lactam carbonyl group. This Claviceps purpurea (strain 20.1) (Ergot fungus) protein is Tryptophan dimethylallyltransferase 1.